The following is a 150-amino-acid chain: Large ribosomal subunit protein bL9 (150 aa).

This sequence belongs to the bacterial ribosomal protein bL9 family.

Its function is as follows. Binds to the 23S rRNA. The polypeptide is Large ribosomal subunit protein bL9 (Lactococcus lactis subsp. cremoris (strain SK11)).